Consider the following 346-residue polypeptide: S-adenosylmethionine:tRNA ribosyltransferase-isomerase (346 aa).

It belongs to the QueA family. As to quaternary structure, monomer.

Its subcellular location is the cytoplasm. The enzyme catalyses 7-aminomethyl-7-carbaguanosine(34) in tRNA + S-adenosyl-L-methionine = epoxyqueuosine(34) in tRNA + adenine + L-methionine + 2 H(+). It functions in the pathway tRNA modification; tRNA-queuosine biosynthesis. Transfers and isomerizes the ribose moiety from AdoMet to the 7-aminomethyl group of 7-deazaguanine (preQ1-tRNA) to give epoxyqueuosine (oQ-tRNA). In Borreliella afzelii (strain PKo) (Borrelia afzelii), this protein is S-adenosylmethionine:tRNA ribosyltransferase-isomerase.